The following is a 617-amino-acid chain: Putative type VI secretion system protein VgrGA (617 aa).

Disordered stretches follow at residues 325–344 (GQQP…TLSN) and 449–469 (RTFH…TRTS).

This sequence belongs to the VgrG protein family.

Functionally, a Vgr protein that is probably part of a type VI secretion system (T6SS). May be required for export of proteins involved in Rhs-mediated cellular contact-dependent growth inhibition (CDI). In Dickeya dadantii (strain 3937) (Erwinia chrysanthemi (strain 3937)), this protein is Putative type VI secretion system protein VgrGA (vgrGA).